The chain runs to 79 residues: UPF0654 protein C11D3.01c (79 aa).

The interval 1–79 is disordered; it reads MPNPGNVIGG…RAQEELENLE (79 aa). Over residues 22–45 the composition is skewed to basic and acidic residues; the sequence is EETKQREKEYLEEHEGEVGEEHQK.

This sequence belongs to the UPF0654 (con-6) family.

In Schizosaccharomyces pombe (strain 972 / ATCC 24843) (Fission yeast), this protein is UPF0654 protein C11D3.01c.